The sequence spans 390 residues: Phosphoglycerate kinase (390 aa).

Residues 21-23 (DLN), Arg-36, 59-62 (HLGR), Arg-112, and Arg-145 contribute to the substrate site. Residues Lys-196, Glu-317, and 343–346 (GGDT) contribute to the ATP site.

Belongs to the phosphoglycerate kinase family. Monomer.

It is found in the cytoplasm. It carries out the reaction (2R)-3-phosphoglycerate + ATP = (2R)-3-phospho-glyceroyl phosphate + ADP. It participates in carbohydrate degradation; glycolysis; pyruvate from D-glyceraldehyde 3-phosphate: step 2/5. This Cellvibrio japonicus (strain Ueda107) (Pseudomonas fluorescens subsp. cellulosa) protein is Phosphoglycerate kinase.